The sequence spans 210 residues: Silenced mating-type protein ALPHA2 (210 aa).

Met1 is subject to N-acetylmethionine. The interval 1–102 is N-terminal domain; sequence MNKIPIKDLL…RSIENDRSNY (102 aa). A flexible linker region spans residues 103-128; sequence QLTQKNKSADGLVFNVVTQDMINKST. A DNA-binding region (homeobox; TALE-type) is located at residues 129–191; the sequence is KPYRGHRFTK…NRRRKEKTIT (63 aa). The segment at 190–210 is C-terminal tail; the sequence is ITIAPELADLLSGEPLAKKKE.

It belongs to the TALE/M-ATYP homeobox family.

The protein localises to the nucleus. Mating type proteins are sequence specific DNA-binding proteins that act as master switches in yeast differentiation by controlling gene expression in a cell type-specific fashion. Silenced copy of ALPHA2 at HML. The protein is Silenced mating-type protein ALPHA2 (HMLALPHA2) of Saccharomyces cerevisiae (strain ATCC 204508 / S288c) (Baker's yeast).